Here is a 609-residue protein sequence, read N- to C-terminus: Manganese lipoxygenase (609 aa).

Positions 1–16 (MRLLLSIAGLTTVVNA) are cleaved as a signal peptide. Asparagine 24, asparagine 115, asparagine 156, and asparagine 193 each carry an N-linked (GlcNAc...) asparagine glycan. The Lipoxygenase domain maps to 117–609 (SLKAIQDHGG…PGVIPFYLSV (493 aa)). Mn(2+) contacts are provided by histidine 289 and histidine 294. The N-linked (GlcNAc...) asparagine glycan is linked to asparagine 385. Mn(2+)-binding residues include histidine 474 and asparagine 478. Asparagine 539 carries N-linked (GlcNAc...) asparagine glycosylation. Mn(2+) is bound at residue valine 609.

This sequence belongs to the lipoxygenase family. Manganese lipoxygenase subfamily. Mn(2+) is required as a cofactor. In terms of processing, N- and O-glycosylated.

The protein localises to the secreted. It carries out the reaction (9Z,12Z)-octadecadienoate + O2 = (9S)-hydroperoxy-(10E,12Z)-octadecadienoate. It catalyses the reaction (9Z,12Z)-octadecadienoate + O2 = (11S)-hydroperoxy-(9Z,12Z)-octadecadienoate. The enzyme catalyses (9Z,12Z)-octadecadienoate + O2 = (13R)-hydroperoxy-(9Z,11E)-octadecadienoate. The catalysed reaction is (9Z,12Z,15Z)-octadecatrienoate + O2 = (11R)-hydroperoxy-(9Z,12Z,15Z)-octadecatrienoate. In terms of biological role, lipoxygenase that metabolizes linoleic and alpha-linolenic acids to 9-, 11- and 13-hydroperoxy fatty acids. Oxidizes linoleic acid to mainly 9S- and 13R-HPODE and alpha-linolenic acid to 11R-HPOTrE. This chain is Manganese lipoxygenase, found in Colletotrichum gloeosporioides (strain Cg-14) (Anthracnose fungus).